The following is a 110-amino-acid chain: Holo-[acyl-carrier-protein] synthase (110 aa).

2 residues coordinate Mg(2+): aspartate 8 and glutamate 54.

It belongs to the P-Pant transferase superfamily. AcpS family. It depends on Mg(2+) as a cofactor.

The protein resides in the cytoplasm. It catalyses the reaction apo-[ACP] + CoA = holo-[ACP] + adenosine 3',5'-bisphosphate + H(+). In terms of biological role, transfers the 4'-phosphopantetheine moiety from coenzyme A to a Ser of acyl-carrier-protein. The chain is Holo-[acyl-carrier-protein] synthase from Mycoplasma capricolum subsp. capricolum (strain California kid / ATCC 27343 / NCTC 10154).